Consider the following 108-residue polypeptide: Kanamycin resistance protein (108 aa).

Residues 1–99 (SRTLLLERGR…PAVYMVQTRQ (99 aa)) enclose the N-acetyltransferase domain.

This chain is Kanamycin resistance protein, found in Rhizobium radiobacter (Agrobacterium tumefaciens).